The sequence spans 209 residues: Large ribosomal subunit protein bL9 (209 aa).

Residues 169–209 are disordered; the sequence is RDGASFTEDYDPNAEPGLATEAEEAVADADDNAETNSEESL. Over residues 189–209 the composition is skewed to acidic residues; sequence EAEEAVADADDNAETNSEESL.

It belongs to the bacterial ribosomal protein bL9 family.

Its function is as follows. Binds to the 23S rRNA. The chain is Large ribosomal subunit protein bL9 from Zymomonas mobilis subsp. mobilis (strain ATCC 31821 / ZM4 / CP4).